The primary structure comprises 287 residues: Acetyl-coenzyme A carboxylase carboxyl transferase subunit beta (287 aa).

One can recognise a CoA carboxyltransferase N-terminal domain in the interval 25-287 (IWTKCSGCVQ…KLTQQSFSEK (263 aa)). Zn(2+)-binding residues include cysteine 29, cysteine 32, cysteine 48, and cysteine 51. The C4-type zinc finger occupies 29-51 (CSGCVQLLYTKELERNLQVCPKC).

The protein belongs to the AccD/PCCB family. As to quaternary structure, acetyl-CoA carboxylase is a heterohexamer composed of biotin carboxyl carrier protein (AccB), biotin carboxylase (AccC) and two subunits each of ACCase subunit alpha (AccA) and ACCase subunit beta (AccD). Zn(2+) is required as a cofactor.

The protein localises to the cytoplasm. The catalysed reaction is N(6)-carboxybiotinyl-L-lysyl-[protein] + acetyl-CoA = N(6)-biotinyl-L-lysyl-[protein] + malonyl-CoA. It participates in lipid metabolism; malonyl-CoA biosynthesis; malonyl-CoA from acetyl-CoA: step 1/1. Functionally, component of the acetyl coenzyme A carboxylase (ACC) complex. Biotin carboxylase (BC) catalyzes the carboxylation of biotin on its carrier protein (BCCP) and then the CO(2) group is transferred by the transcarboxylase to acetyl-CoA to form malonyl-CoA. The polypeptide is Acetyl-coenzyme A carboxylase carboxyl transferase subunit beta (Blochmanniella floridana).